We begin with the raw amino-acid sequence, 253 residues long: 3-deoxy-manno-octulosonate cytidylyltransferase (253 aa).

Belongs to the KdsB family.

The protein localises to the cytoplasm. The catalysed reaction is 3-deoxy-alpha-D-manno-oct-2-ulosonate + CTP = CMP-3-deoxy-beta-D-manno-octulosonate + diphosphate. Its pathway is nucleotide-sugar biosynthesis; CMP-3-deoxy-D-manno-octulosonate biosynthesis; CMP-3-deoxy-D-manno-octulosonate from 3-deoxy-D-manno-octulosonate and CTP: step 1/1. The protein operates within bacterial outer membrane biogenesis; lipopolysaccharide biosynthesis. Functionally, activates KDO (a required 8-carbon sugar) for incorporation into bacterial lipopolysaccharide in Gram-negative bacteria. The sequence is that of 3-deoxy-manno-octulosonate cytidylyltransferase from Edwardsiella ictaluri (strain 93-146).